A 156-amino-acid polypeptide reads, in one-letter code: RNA pyrophosphohydrolase (156 aa).

The Nudix hydrolase domain occupies 6 to 148; sequence NYRPNVAAIV…KKNIYVRVIK (143 aa). Positions 43–64 match the Nudix box motif; that stretch reads GGIDKGESVKNALFRELKEEIG.

Belongs to the Nudix hydrolase family. RppH subfamily. Requires a divalent metal cation as cofactor.

Its function is as follows. Accelerates the degradation of transcripts by removing pyrophosphate from the 5'-end of triphosphorylated RNA, leading to a more labile monophosphorylated state that can stimulate subsequent ribonuclease cleavage. The sequence is that of RNA pyrophosphohydrolase from Campylobacter jejuni subsp. jejuni serotype O:2 (strain ATCC 700819 / NCTC 11168).